Consider the following 281-residue polypeptide: Lipoyl synthase (281 aa).

[4Fe-4S] cluster-binding residues include C37, C42, C48, C63, C67, C70, and S274. The Radical SAM core domain maps to 49–263; sequence WSRGTATFMI…RQQAVNKGFK (215 aa).

The protein belongs to the radical SAM superfamily. Lipoyl synthase family. [4Fe-4S] cluster serves as cofactor.

It is found in the cytoplasm. It catalyses the reaction [[Fe-S] cluster scaffold protein carrying a second [4Fe-4S](2+) cluster] + N(6)-octanoyl-L-lysyl-[protein] + 2 oxidized [2Fe-2S]-[ferredoxin] + 2 S-adenosyl-L-methionine + 4 H(+) = [[Fe-S] cluster scaffold protein] + N(6)-[(R)-dihydrolipoyl]-L-lysyl-[protein] + 4 Fe(3+) + 2 hydrogen sulfide + 2 5'-deoxyadenosine + 2 L-methionine + 2 reduced [2Fe-2S]-[ferredoxin]. It functions in the pathway protein modification; protein lipoylation via endogenous pathway; protein N(6)-(lipoyl)lysine from octanoyl-[acyl-carrier-protein]: step 2/2. Functionally, catalyzes the radical-mediated insertion of two sulfur atoms into the C-6 and C-8 positions of the octanoyl moiety bound to the lipoyl domains of lipoate-dependent enzymes, thereby converting the octanoylated domains into lipoylated derivatives. The sequence is that of Lipoyl synthase from Parabacteroides distasonis (strain ATCC 8503 / DSM 20701 / CIP 104284 / JCM 5825 / NCTC 11152).